We begin with the raw amino-acid sequence, 199 residues long: N-(5'-phosphoribosyl)anthranilate isomerase (199 aa).

Belongs to the TrpF family.

The enzyme catalyses N-(5-phospho-beta-D-ribosyl)anthranilate = 1-(2-carboxyphenylamino)-1-deoxy-D-ribulose 5-phosphate. The protein operates within amino-acid biosynthesis; L-tryptophan biosynthesis; L-tryptophan from chorismate: step 3/5. The sequence is that of N-(5'-phosphoribosyl)anthranilate isomerase from Campylobacter jejuni subsp. jejuni serotype O:2 (strain ATCC 700819 / NCTC 11168).